We begin with the raw amino-acid sequence, 297 residues long: 33 kDa chaperonin (297 aa).

Disulfide bonds link Cys-233/Cys-235 and Cys-267/Cys-270.

This sequence belongs to the HSP33 family. Post-translationally, under oxidizing conditions two disulfide bonds are formed involving the reactive cysteines. Under reducing conditions zinc is bound to the reactive cysteines and the protein is inactive.

The protein localises to the cytoplasm. Functionally, redox regulated molecular chaperone. Protects both thermally unfolding and oxidatively damaged proteins from irreversible aggregation. Plays an important role in the bacterial defense system toward oxidative stress. This Haemophilus ducreyi (strain 35000HP / ATCC 700724) protein is 33 kDa chaperonin.